The sequence spans 154 residues: RxLR effector protein PexRD24 (154 aa).

The signal sequence occupies residues 1–22 (MHSSLLWLGAVVALLAVNNVTA). A RxLR-dEER motif is present at residues 53 to 67 (RSLRAVETSEDEEER). K138 is a short sequence motif (PP1c-binding motif).

The protein belongs to the RxLR effector family. As to quaternary structure, interacts with the potato PP1c family proteins PP1c-1, PP1c-2 and PP1c-3.

The protein resides in the secreted. It is found in the host nucleus. The protein localises to the host nucleoplasm. Its subcellular location is the host nucleolus. Effector that interacts with isoforms of host protein phosphatase type 1c (PP1c), mimicking a regulatory subunit and causing their re-localization within the host nucleus. The holoenzymes formed with PP1c isoforms act to promote late blight by attenuating jasmonic acid (JA)- and salicylic acid (SA)-mediated transcriptional responses of the host plant. The sequence is that of RxLR effector protein PexRD24 from Phytophthora infestans (strain T30-4) (Potato late blight agent).